We begin with the raw amino-acid sequence, 338 residues long: Heat-inducible transcription repressor HrcA (338 aa).

It belongs to the HrcA family.

Functionally, negative regulator of class I heat shock genes (grpE-dnaK-dnaJ and groELS operons). Prevents heat-shock induction of these operons. The protein is Heat-inducible transcription repressor HrcA of Streptomyces avermitilis (strain ATCC 31267 / DSM 46492 / JCM 5070 / NBRC 14893 / NCIMB 12804 / NRRL 8165 / MA-4680).